The chain runs to 132 residues: Neurophysin 2 (132 aa).

7 disulfide bridges follow: C10–C54, C13–C27, C21–C44, C28–C34, C61–C73, C67–C85, and C74–C79.

Belongs to the vasopressin/oxytocin family.

The protein localises to the secreted. Its function is as follows. Neurophysin 2 specifically binds vasopressin. This chain is Neurophysin 2, found in Struthio camelus (Common ostrich).